The chain runs to 482 residues: MSTVESALTRRIMGIETEYGLTFVDGDSKKLRPDEIARRMFRPIVEKYSSSNIFIPNGSRLYLDVGSHPEYATAECDNLTQLINFEKAGDVIADRMAVDAEESLAKEDIAGQVYLFKNNVDSVGNSYGCHENYLVGRSMPLKALGKRLMPFLITRQLICGAGRIHHPNPLDKGESFPLGYCISQRSDHVWEGVSSATTRSRPIINTRDEPHADSHSYRRLHVIVGDANMAEPSIALKVGSTLLVLEMIEADFGLPSLELANDIASIREISRDATGSTLLSLKDGTTMTALQIQQVVFEHASKWLEQRPEPEFSGTSNTEMARVLDLWGRMLKAIESGDFSEVDTEIDWVIKKKLIDRFIQRGNLGLDDPKLAQVDLTYHDIRPGRGLFSVLQSRGMIKRWTTDEAILAAVDTAPDTTRAHLRGRILKAADTLGVPVTVDWMRHKVNRPEPQSVELGDPFSAVNSEVDQLIEYMTVHAESYRS.

E16 contacts Mg(2+). R60 is a binding site for ATP. Y62 contributes to the Mg(2+) binding site. The Proton acceptor role is filled by D64. E70 contributes to the Mg(2+) binding site. The ATP site is built by T73 and W440.

Belongs to the Pup ligase/Pup deamidase family. Pup-conjugating enzyme subfamily.

It catalyses the reaction ATP + [prokaryotic ubiquitin-like protein]-L-glutamate + [protein]-L-lysine = ADP + phosphate + N(6)-([prokaryotic ubiquitin-like protein]-gamma-L-glutamyl)-[protein]-L-lysine.. The protein operates within protein degradation; proteasomal Pup-dependent pathway. It functions in the pathway protein modification; protein pupylation. Catalyzes the covalent attachment of the prokaryotic ubiquitin-like protein modifier Pup to the proteasomal substrate proteins, thereby targeting them for proteasomal degradation. This tagging system is termed pupylation. The ligation reaction involves the side-chain carboxylate of the C-terminal glutamate of Pup and the side-chain amino group of a substrate lysine. The chain is Pup--protein ligase from Corynebacterium glutamicum (strain R).